The primary structure comprises 95 residues: Probable FAD-linked sulfhydryl oxidase OPG072 (95 aa).

Residues 1–8 (MNPKHWGR) are Intravirion-facing. The region spanning 1-95 (MNPKHWGRAV…AIDVSKVKPL (95 aa)) is the ERV/ALR sulfhydryl oxidase domain. The helical transmembrane segment at 9–25 (AVWTIIFIVLSQAGLDG) threads the bilayer. Residues 26-95 (NIEACKRKLY…AIDVSKVKPL (70 aa)) are Virion surface-facing. A disulfide bond links C43 and C46.

It belongs to the orthopoxvirus OPG072 family. As to quaternary structure, interacts with OPG128; this interaction involves formation of a transient disulfide-bonded intermediate, allowing disulfide bond transfer. Requires FAD as cofactor.

It localises to the virion membrane. It is found in the host cytoplasm. It carries out the reaction 2 R'C(R)SH + O2 = R'C(R)S-S(R)CR' + H2O2. FAD-dependent sulfhydryl oxidase that catalyzes disulfide bond formation. The complete pathway for formation of disulfide bonds in intracellular virion membrane proteins sequentially involves thiol-disulfide transfer between OPG072, OPG128 and OPG088. The sequence is that of Probable FAD-linked sulfhydryl oxidase OPG072 (OPG072) from Monkeypox virus.